The chain runs to 252 residues: Chitooligosaccharide deacetylase (252 aa).

Mg(2+) contacts are provided by histidine 61 and histidine 125.

This sequence belongs to the YdjC deacetylase family. ChbG subfamily. As to quaternary structure, homodimer. Requires Mg(2+) as cofactor.

The protein resides in the cytoplasm. The enzyme catalyses N,N'-diacetylchitobiose + H2O = N-acetyl-beta-D-glucosaminyl-(1-&gt;4)-D-glucosamine + acetate. It catalyses the reaction diacetylchitobiose-6'-phosphate + H2O = N'-monoacetylchitobiose-6'-phosphate + acetate. It participates in glycan degradation; chitin degradation. Its function is as follows. Involved in the degradation of chitin. ChbG is essential for growth on the acetylated chitooligosaccharides chitobiose and chitotriose but is dispensable for growth on cellobiose and chitosan dimer, the deacetylated form of chitobiose. Deacetylation of chitobiose-6-P and chitotriose-6-P is necessary for both the activation of the chb promoter by the regulatory protein ChbR and the hydrolysis of phosphorylated beta-glucosides by the phospho-beta-glucosidase ChbF. Catalyzes the removal of only one acetyl group from chitobiose-6-P to yield monoacetylchitobiose-6-P, the inducer of ChbR and the substrate of ChbF. This chain is Chitooligosaccharide deacetylase, found in Salmonella dublin (strain CT_02021853).